A 508-amino-acid chain; its full sequence is Aldehyde dehydrogenase family 7 member A1 (508 aa).

244–249 (GSSKVG) contacts NAD(+). Catalysis depends on E266, which acts as the Proton acceptor. C300 acts as the Nucleophile in catalysis.

This sequence belongs to the aldehyde dehydrogenase family. As to quaternary structure, homotetramer.

It catalyses the reaction an aldehyde + NAD(+) + H2O = a carboxylate + NADH + 2 H(+). In terms of biological role, may play a role in fruit development. This chain is Aldehyde dehydrogenase family 7 member A1, found in Malus domestica (Apple).